Consider the following 21-residue polypeptide: Apolipophorin 2 (21 aa).

Expressed in hemolymph.

It is found in the secreted. Functionally, constitutes the major component of lipophorin, which mediates transport for various types of lipids in hemolymph. Acts by forming lipoprotein particles that bind lipoproteins and lipids. This Galleria mellonella (Greater wax moth) protein is Apolipophorin 2.